Consider the following 74-residue polypeptide: ATP synthase subunit 9, mitochondrial (74 aa).

Helical transmembrane passes span 8-28 (IGAG…GNVF) and 50-70 (ILGF…AFLI).

Belongs to the ATPase C chain family. F-type ATPases have 2 components, CF(1) - the catalytic core - and CF(0) - the membrane proton channel. CF(1) has five subunits: alpha(3), beta(3), gamma(1), delta(1), epsilon(1). CF(0) has three main subunits: a, b and c.

Its subcellular location is the mitochondrion membrane. Its function is as follows. This protein is one of the chains of the nonenzymatic membrane component (F0) of mitochondrial ATPase. The chain is ATP synthase subunit 9, mitochondrial (ATP9) from Brassica napus (Rape).